The primary structure comprises 212 residues: Large ribosomal subunit protein uL1 (212 aa).

Belongs to the universal ribosomal protein uL1 family. In terms of assembly, part of the 50S ribosomal subunit.

Binds directly to 23S rRNA. Probably involved in E site tRNA release. Its function is as follows. Protein L1 is also a translational repressor protein, it controls the translation of its operon by binding to its mRNA. The polypeptide is Large ribosomal subunit protein uL1 (Haloarcula marismortui (strain ATCC 43049 / DSM 3752 / JCM 8966 / VKM B-1809) (Halobacterium marismortui)).